A 200-amino-acid polypeptide reads, in one-letter code: Probable GTP-binding protein EngB (200 aa).

An EngB-type G domain is found at 26–200 (SIPEVALAGR…IYEIAQCIKK (175 aa)). Residues 34–41 (GRSNVGKS), 61–65 (GCTRQ), 80–83 (DLPG), 147–150 (TKID), and 179–181 (VSS) each bind GTP. Mg(2+)-binding residues include Ser41 and Thr63.

Belongs to the TRAFAC class TrmE-Era-EngA-EngB-Septin-like GTPase superfamily. EngB GTPase family. The cofactor is Mg(2+).

Its function is as follows. Necessary for normal cell division and for the maintenance of normal septation. This is Probable GTP-binding protein EngB from Ehrlichia ruminantium (strain Welgevonden).